The chain runs to 454 residues: ADP-specific phosphofructokinase (454 aa).

The region spanning 1 to 452 (MIDEVRELGI…FLSYLSLLRR (452 aa)) is the ADPK domain. 3 residues coordinate Mg(2+): E263, E293, and D436. Catalysis depends on D436, which acts as the Proton acceptor.

Belongs to the carbohydrate kinase PfkC family. As to quaternary structure, homotetramer. Requires Mg(2+) as cofactor.

It localises to the cytoplasm. It catalyses the reaction beta-D-fructose 6-phosphate + ADP = beta-D-fructose 1,6-bisphosphate + AMP + H(+). It participates in carbohydrate degradation; glycolysis. With respect to regulation, inhibited by AMP and ATP. Its function is as follows. Catalyzes the phosphorylation of fructose 6-phosphate to fructose 1,6-bisphosphate using ADP as the phosphate donor. As a phosphoryl group donor, ADP can be replaced by GDP, ATP, and GTP to a limited extent. This chain is ADP-specific phosphofructokinase (pfkC), found in Pyrococcus furiosus (strain ATCC 43587 / DSM 3638 / JCM 8422 / Vc1).